Consider the following 416-residue polypeptide: Major royal jelly protein 8 (416 aa).

The signal sequence occupies residues 1–16 (MIRWLLLMYLGITCQG). Residues Asn24, Asn58, Asn93, Asn115, Asn158, Asn175, Asn196, and Asn215 are each glycosylated (N-linked (GlcNAc...) asparagine).

The protein belongs to the major royal jelly protein family. As to expression, expressed at very low levels in the hypopharyngeal glands of worker honey bees (at protein level). Secreted into bee venom in the sting apparatus (at protein level). Expressed in the spermatheca of adult queen bees (at protein level); expression levels are higher in mated queens than in virgin queens. Along with Mrjp9 expressed at very low levels in the head of worker bees compared to other major royal jelly proteins.

It localises to the secreted. Functionally, component of bee sting venom. Component of royal jelly, a substance produced in the hypopharyngeal gland containing proteins, free amino acids, fatty acids, sugars and other nutrients, which is fed to developing larvae by worker nurse bees; may be present only at trace levels. All larvae are fed some royal jelly (also known as worker jelly) early in their development but it forms the principal source of nutrition for larvae destined to become queen bees. Produced in the spermatheca of adult queen bees, along with other major royal jelly proteins, where it may act as a nutrient supply for sperm stored by mated queens, or be involved in energy metabolism. The sequence is that of Major royal jelly protein 8 from Apis mellifera (Honeybee).